The primary structure comprises 128 residues: LIM domain-containing protein 2 (128 aa).

Position 1 is an N-acetylmethionine (M1). Positions 1–25 (MFQAAGAAQATPSHEAKGGGSSSTV) are disordered. Residues 39–99 (ETCAACQKTV…KPHFQQLFKS (61 aa)) enclose the LIM zinc-binding domain. The Zn(2+) site is built by C41, C44, H62, C65, C68, C71, C89, and H92.

As to quaternary structure, interacts with ILK.

Its subcellular location is the cytoplasm. It localises to the nucleus. Acts as an activator of the protein-kinase ILK, thereby regulating cell motility. The chain is LIM domain-containing protein 2 (LIMD2) from Bos taurus (Bovine).